A 59-amino-acid polypeptide reads, in one-letter code: Large ribosomal subunit protein uL30 (59 aa).

This sequence belongs to the universal ribosomal protein uL30 family. Part of the 50S ribosomal subunit.

The chain is Large ribosomal subunit protein uL30 from Buchnera aphidicola subsp. Acyrthosiphon kondoi (Acyrthosiphon kondoi symbiotic bacterium).